We begin with the raw amino-acid sequence, 215 residues long: uncharacterized protein (215 aa).

Active-site charge relay system residues include Ser-114, Asp-162, and His-194.

This sequence belongs to the AB hydrolase superfamily. AB hydrolase 2 family.

This is an uncharacterized protein from Rickettsia felis (strain ATCC VR-1525 / URRWXCal2) (Rickettsia azadi).